We begin with the raw amino-acid sequence, 247 residues long: Pyridoxine 5'-phosphate synthase (247 aa).

Asparagine 12 contributes to the 3-amino-2-oxopropyl phosphate binding site. 1-deoxy-D-xylulose 5-phosphate is bound at residue 14 to 15 (DH). Position 23 (arginine 23) interacts with 3-amino-2-oxopropyl phosphate. The Proton acceptor role is filled by histidine 48. Arginine 50 and histidine 55 together coordinate 1-deoxy-D-xylulose 5-phosphate. The active-site Proton acceptor is the glutamate 75. Residue threonine 105 participates in 1-deoxy-D-xylulose 5-phosphate binding. Residue histidine 196 is the Proton donor of the active site. Residues glycine 197 and 218–219 (GH) each bind 3-amino-2-oxopropyl phosphate.

This sequence belongs to the PNP synthase family. As to quaternary structure, homooctamer; tetramer of dimers.

It is found in the cytoplasm. The catalysed reaction is 3-amino-2-oxopropyl phosphate + 1-deoxy-D-xylulose 5-phosphate = pyridoxine 5'-phosphate + phosphate + 2 H2O + H(+). It participates in cofactor biosynthesis; pyridoxine 5'-phosphate biosynthesis; pyridoxine 5'-phosphate from D-erythrose 4-phosphate: step 5/5. Its function is as follows. Catalyzes the complicated ring closure reaction between the two acyclic compounds 1-deoxy-D-xylulose-5-phosphate (DXP) and 3-amino-2-oxopropyl phosphate (1-amino-acetone-3-phosphate or AAP) to form pyridoxine 5'-phosphate (PNP) and inorganic phosphate. The protein is Pyridoxine 5'-phosphate synthase of Pseudomonas fluorescens (strain SBW25).